The chain runs to 444 residues: Enolase 2 (444 aa).

Substrate-binding residues include histidine 165 and glutamate 174. The Proton donor role is filled by glutamate 217. Aspartate 252, glutamate 303, and aspartate 330 together coordinate Mg(2+). Substrate contacts are provided by glutamate 303 and aspartate 330. Residue lysine 355 is the Proton acceptor of the active site. Residues 382-385 (SHRS) and lysine 406 each bind substrate.

The protein belongs to the enolase family. In terms of assembly, homodimer. It depends on Mg(2+) as a cofactor.

The protein resides in the cytoplasm. The enzyme catalyses (2R)-2-phosphoglycerate = phosphoenolpyruvate + H2O. The protein operates within carbohydrate degradation; glycolysis; pyruvate from D-glyceraldehyde 3-phosphate: step 4/5. In Toxoplasma gondii, this protein is Enolase 2 (ENO2).